We begin with the raw amino-acid sequence, 406 residues long: RING finger protein PSH1 (406 aa).

The RING-type zinc-finger motif lies at 30-72 (CSICHDYMFVPMMTPCGHNYCYGCLNTWFASNTQKELACPQCR). 2 positions are modified to phosphoserine: S143 and S191. Positions 209–406 (RFASTNPFAN…RVVLGDSDDE (198 aa)) are disordered. Composition is skewed to acidic residues over residues 223-232 (SSEDDDSSEE), 256-274 (AVDDEDDEEEDEEEEEEMD), and 281-291 (IEDDEDDEDED). T310 carries the phosphothreonine modification. S403 carries the post-translational modification Phosphoserine.

As to quaternary structure, interacts with POB3 and SPT16.

The protein resides in the nucleus. In Saccharomyces cerevisiae (strain ATCC 204508 / S288c) (Baker's yeast), this protein is RING finger protein PSH1 (PSH1).